The following is a 218-amino-acid chain: 3-phospho-D-glycerate guanylyltransferase (218 aa).

The protein belongs to the CofC family.

It catalyses the reaction (2R)-3-phosphoglycerate + GTP + H(+) = 3-[(R)-glyceryl]-diphospho-5'-guanosine + diphosphate. It functions in the pathway cofactor biosynthesis; coenzyme F420 biosynthesis. In terms of biological role, guanylyltransferase that catalyzes the activation of (2R)-3-phosphoglycerate (3PG) as 3-[(R)-glyceryl]-diphospho-5'-guanosine, via the condensation of 3PG with GTP. It is involved in the biosynthesis of a derivative of the hydride carrier cofactor coenzyme F420, 3PG-F420. This Phenylobacterium zucineum (strain HLK1) protein is 3-phospho-D-glycerate guanylyltransferase.